The chain runs to 89 residues: Small ribosomal subunit protein uS19 (89 aa).

Belongs to the universal ribosomal protein uS19 family.

In terms of biological role, protein S19 forms a complex with S13 that binds strongly to the 16S ribosomal RNA. This chain is Small ribosomal subunit protein uS19, found in Azobacteroides pseudotrichonymphae genomovar. CFP2.